The primary structure comprises 504 residues: L-carnitine/gamma-butyrobetaine antiporter (504 aa).

12 helical membrane passes run 10–30, 51–71, 92–112, 143–163, 195–215, 231–251, 263–283, 316–336, 347–367, 398–418, 446–466, and 475–495; these read IEPK…WLTV, WGWA…WLVF, IFMM…SIEI, GPLP…FFFV, FYLV…TPLV, LDAI…ACGL, SYLS…SFIM, WTVF…IFLA, LCFG…TVLG, WAAL…CFIA, LLVR…LLAL, and AIIA…LSFI.

Belongs to the BCCT transporter (TC 2.A.15) family. CaiT subfamily. As to quaternary structure, homotrimer.

It localises to the cell inner membrane. The enzyme catalyses 4-(trimethylamino)butanoate(in) + (R)-carnitine(out) = 4-(trimethylamino)butanoate(out) + (R)-carnitine(in). Its pathway is amine and polyamine metabolism; carnitine metabolism. Functionally, catalyzes the exchange of L-carnitine for gamma-butyrobetaine. In Escherichia coli (strain ATCC 8739 / DSM 1576 / NBRC 3972 / NCIMB 8545 / WDCM 00012 / Crooks), this protein is L-carnitine/gamma-butyrobetaine antiporter.